Reading from the N-terminus, the 248-residue chain is Large ribosomal subunit protein uL4 (248 aa).

Disordered stretches follow at residues 48 to 96 (GTHK…PVPR) and 210 to 248 (AFSE…RTGA). Residues 233–248 (DATKARSSRHDDRTGA) are compositionally biased toward basic and acidic residues.

The protein belongs to the universal ribosomal protein uL4 family. In terms of assembly, part of the 50S ribosomal subunit.

Functionally, one of the primary rRNA binding proteins, this protein initially binds near the 5'-end of the 23S rRNA. It is important during the early stages of 50S assembly. It makes multiple contacts with different domains of the 23S rRNA in the assembled 50S subunit and ribosome. Its function is as follows. Forms part of the polypeptide exit tunnel. The polypeptide is Large ribosomal subunit protein uL4 (Tropheryma whipplei (strain Twist) (Whipple's bacillus)).